The following is a 1765-amino-acid chain: RANBP2-like and GRIP domain-containing protein 5/6 (1765 aa).

The residue at position 19 (threonine 19) is a Phosphothreonine. Serine 21 bears the Phosphoserine mark. TPR repeat units lie at residues 26–59, 60–93, and 648–681; these read SMKG…QERD, PKAH…NPTQ, and EDAH…VSYW. 2 disordered regions span residues 760-804 and 924-945; these read GPLY…PRWT and FGIS…NDTG. Residues 778–797 are compositionally biased toward low complexity; sequence STPSPTKYSLSPSKSYKYSP. Residues 931-941 show a composition bias toward basic and acidic residues; the sequence is NQEKKREKPLE. The region spanning 1036 to 1172 is the RanBD1 1 domain; sequence HFEPVVQMPE…FEECQRLLLD (137 aa). Disordered regions lie at residues 1214–1247 and 1306–1330; these read KVTE…PTLE and AKLN…EERD. The segment covering 1235–1244 has biased composition (polar residues); it reads IKPNAENTGP. Positions 1317-1329 are enriched in acidic residues; sequence TDEESVVTQEEER. The region spanning 1333–1469 is the RanBD1 2 domain; it reads YFEPVVPLPD…FDEAKTAQEK (137 aa). The segment covering 1580–1593 has biased composition (polar residues); the sequence is NNSETSSVAQSGSE. Residues 1580 to 1621 form a disordered region; the sequence is NNSETSSVAQSGSESKVEPKKCELSKNSDIEQSSDSKVKNLS. The segment covering 1594–1617 has biased composition (basic and acidic residues); sequence SKVEPKKCELSKNSDIEQSSDSKV. Residues 1702 to 1752 enclose the GRIP domain; it reads REKSAANLEYLKNVLLQFIFLKPGSERERLLPVINTMLQLSPEEKGKLAAV.

As to expression, expressed in testis.

It localises to the cytoplasm. The sequence is that of RANBP2-like and GRIP domain-containing protein 5/6 (RGPD5) from Homo sapiens (Human).